A 349-amino-acid polypeptide reads, in one-letter code: MAPCVAGWLGGFLLVPALGMIPPPEKVRMNSVNFKNILQWEVPAFPKTNLTFTAQYESYRSFQDHCKRTASTQCDFSHLSKYGDYTVRVRAELADEHSEWVNVTFCPVEDTIIGPPEMQIESLAESLHLRFSAPQIENEPETWTLKNIYDSWAYRVQYWKNGTNEKFQVVSPYDSEVLRNLEPWTTYCIQVQGFLLDQNRTGEWSEPICERTGNDEITPSWIVAIILIVSVLVVFLFLLGCFVVLWLIYKKTKHTFRSGTSLPQHLKEFLGHPHHSTFLLFSFPPPEEAEVFDKLSIISEESEGSKQSPEDNCASEPPSDPGPRELESKDEAPSPPHDDPKLLTSTSEV.

A signal peptide spans 1 to 19 (MAPCVAGWLGGFLLVPALG). Residues 20-220 (MIPPPEKVRM…RTGNDEITPS (201 aa)) lie on the Extracellular side of the membrane. Fibronectin type-III domains are found at residues 23–111 (PPEK…VEDT) and 112–215 (IIGP…TGND). Residue Asn49 is glycosylated (N-linked (GlcNAc...) asparagine). Cys66 and Cys74 form a disulfide bridge. Residues Asn102, Asn161, and Asn199 are each glycosylated (N-linked (GlcNAc...) asparagine). Cys188 and Cys209 are oxidised to a cystine. The chain crosses the membrane as a helical span at residues 221–241 (WIVAIILIVSVLVVFLFLLGC). Residues 242–349 (FVVLWLIYKK…PKLLTSTSEV (108 aa)) are Cytoplasmic-facing. Ser299 is subject to Phosphoserine. The interval 300-349 (EESEGSKQSPEDNCASEPPSDPGPRELESKDEAPSPPHDDPKLLTSTSEV) is disordered. Over residues 322 to 341 (GPRELESKDEAPSPPHDDPK) the composition is skewed to basic and acidic residues.

The protein belongs to the type II cytokine receptor family. Heterodimer with IFNLR1.

Its subcellular location is the membrane. In terms of biological role, shared cell surface receptor required for the activation of five class 2 cytokines: IL10, IL22, IL26, IL28, and IFNL1. The IFNLR1/IL10RB dimer is a receptor for the cytokine ligands IFNL2 and IFNL3 and mediates their antiviral activity. The ligand/receptor complex stimulate the activation of the JAK/STAT signaling pathway leading to the expression of IFN-stimulated genes (ISG), which contribute to the antiviral state. This Mus musculus (Mouse) protein is Interleukin-10 receptor subunit beta (Il10rb).